Consider the following 307-residue polypeptide: Ras-related protein RabR (307 aa).

A compositionally biased stretch (polar residues) spans 1 to 10 (MTTTTLLSES). The disordered stretch occupies residues 1 to 45 (MTTTTLLSESTNNSNNTNNNTNNNTNNTMNNNNNNNNNNTIGNNN). Residues 11 to 45 (TNNSNNTNNNTNNNTNNTMNNNNNNNNNNTIGNNN) are compositionally biased toward low complexity. Residue 61 to 68 (GDEEVGKG) participates in GTP binding. The short motif at 83–92 (ENLYNIEVDR) is the Effector region element. 122-126 (NFHMH) is a binding site for GTP. Residues 175 to 185 (NFNCQSNSRNS) show a composition bias toward low complexity. The tract at residues 175–223 (NFNCQSNSRNSTNYNRHSVGNHCPNSPQKGEKENNTHSSTAPPAPPPLP) is disordered. Positions 186-202 (TNYNRHSVGNHCPNSPQ) are enriched in polar residues. 230 to 233 (NKCD) lines the GTP pocket. At cysteine 304 the chain carries Cysteine methyl ester. Cysteine 304 is lipidated: S-geranylgeranyl cysteine. Positions 305–307 (NLM) are cleaved as a propeptide — removed in mature form.

Belongs to the small GTPase superfamily. Rab family.

The protein localises to the cell membrane. In Dictyostelium discoideum (Social amoeba), this protein is Ras-related protein RabR (rabR).